A 598-amino-acid polypeptide reads, in one-letter code: Glutamyl-tRNA(Gln) amidotransferase subunit E (598 aa).

The protein belongs to the GatB/GatE family. GatE subfamily. In terms of assembly, heterodimer of GatD and GatE.

The catalysed reaction is L-glutamyl-tRNA(Gln) + L-glutamine + ATP + H2O = L-glutaminyl-tRNA(Gln) + L-glutamate + ADP + phosphate + H(+). In terms of biological role, allows the formation of correctly charged Gln-tRNA(Gln) through the transamidation of misacylated Glu-tRNA(Gln) in organisms which lack glutaminyl-tRNA synthetase. The reaction takes place in the presence of glutamine and ATP through an activated gamma-phospho-Glu-tRNA(Gln). The GatDE system is specific for glutamate and does not act on aspartate. In Thermoplasma volcanium (strain ATCC 51530 / DSM 4299 / JCM 9571 / NBRC 15438 / GSS1), this protein is Glutamyl-tRNA(Gln) amidotransferase subunit E.